The sequence spans 353 residues: ATP-dependent kinase YFH7 (353 aa).

31–39 (GSPGSGKST) is an ATP binding site.

The protein belongs to the YFH7 family.

Its function is as follows. ATP-dependent kinase that could be involved in endoplasmic reticulum membrane assembly. This chain is ATP-dependent kinase YFH7 (YFH7), found in Saccharomyces cerevisiae (strain RM11-1a) (Baker's yeast).